The following is a 581-amino-acid chain: ATP-dependent lipid A-core flippase (581 aa).

Transmembrane regions (helical) follow at residues 27-47 (VFLA…FPAI), 63-83 (MVWL…VIVY), 154-174 (IALI…TLAI), 251-271 (MTPI…FLAL), and 279-299 (GASA…ISPV). Positions 28 to 311 (FLAVIGMVGT…LATVNPTIQR (284 aa)) constitute an ABC transmembrane type-1 domain. Positions 343 to 579 (ICFDNVSLRY…GSYYANLSRL (237 aa)) constitute an ABC transporter domain. Position 377–384 (377–384 (GASGGGKS)) interacts with ATP.

It belongs to the ABC transporter superfamily. Lipid exporter (TC 3.A.1.106) family. Homodimer.

The protein resides in the cell inner membrane. The enzyme catalyses ATP + H2O + lipid A-core oligosaccharideSide 1 = ADP + phosphate + lipid A-core oligosaccharideSide 2.. In terms of biological role, involved in lipopolysaccharide (LPS) biosynthesis. Translocates lipid A-core from the inner to the outer leaflet of the inner membrane. Transmembrane domains (TMD) form a pore in the inner membrane and the ATP-binding domain (NBD) is responsible for energy generation. The sequence is that of ATP-dependent lipid A-core flippase from Albidiferax ferrireducens (strain ATCC BAA-621 / DSM 15236 / T118) (Rhodoferax ferrireducens).